Reading from the N-terminus, the 361-residue chain is Free fatty acid receptor 4 (361 aa).

Residues 1–45 are Extracellular-facing; sequence MSPECARAAGDAPLRSLEQANRTRFPFFSDVKGDHRLVLAAVETT. N21 carries N-linked (GlcNAc...) asparagine glycosylation. Residues 46 to 66 form a helical membrane-spanning segment; it reads VLVLIFAVSLLGNVCALVLVA. Over 67-77 the chain is Cytoplasmic; the sequence is RRRRRGATACL. A helical membrane pass occupies residues 78-98; the sequence is VLNLFCADLLFISAIPLVLAV. Topologically, residues 99–112 are extracellular; the sequence is RWTEAWLLGPVACH. The cysteines at positions 111 and 194 are disulfide-linked. Residues 113-133 traverse the membrane as a helical segment; it reads LLFYVMTLSGSVTILTLAAVS. The Cytoplasmic segment spans residues 134-156; that stretch reads LERMVCIVHLQRGVRGPGRRARA. A helical transmembrane segment spans residues 157-177; it reads VLLALIWGYSAVAALPLCVFF. The Extracellular portion of the chain corresponds to 178-204; it reads RVVPQRLPGADQEISICTLIWPTIPGE. Residues 205 to 225 traverse the membrane as a helical segment; the sequence is ISWDVSFVTLNFLVPGLVIVI. The Cytoplasmic segment spans residues 226 to 268; sequence SYSKILQITKASRKRLTVSLAYSESHQIRVSQQDFRLFRTLFL. A helical transmembrane segment spans residues 269–289; that stretch reads LMVSFFIMWSPIIITILLILI. At 290-295 the chain is on the extracellular side; that stretch reads QNFKQD. A helical membrane pass occupies residues 296-316; sequence LVIWPSLFFWVVAFTFANSAL. Over 317 to 361 the chain is Cytoplasmic; the sequence is NPILYNMTLCRNEWKKIFCCFWFPEKGAILTDTSVKRNDLSIISG. Residues T347 and T349 each carry the phosphothreonine modification. 3 positions are modified to phosphoserine: S350, S357, and S360.

The protein belongs to the G-protein coupled receptor 1 family. As to quaternary structure, interacts (via C-terminus) with ARRB2 following LCFAs stimulation. In terms of processing, phosphorylated at two clusters of Ser and Thr residues located in the intracellular C-terminus, a prerequisite for FFAR4 internalization via an ARRB2-dependent pathway. As to expression, the predominant isoform in human tissues. Expressed in adipose tissue, pancreatic islets, lung and brain. Expressed in alpha cells of pancreatic islets. Expressed in primary cilia of perivascular preadipocytes of white adipose tissue (at protein level). In terms of tissue distribution, abundant expression in the intestinal tract. Expressed in colonic intraepithelial neuroendocrine cells.

The protein resides in the cell membrane. It is found in the endosome membrane. Its subcellular location is the lysosome membrane. It localises to the cell projection. The protein localises to the cilium membrane. G-protein-coupled receptor for long-chain fatty acids (LCFAs) with a major role in adipogenesis, energy metabolism and inflammation. Signals via G-protein and beta-arrestin pathways. LCFAs sensing initiates activation of phosphoinositidase C-linked G proteins GNAQ and GNA11 (G(q)/G(11)), inducing a variety of cellular responses via second messenger pathways such as intracellular calcium mobilization, modulation of cyclic adenosine monophosphate (cAMP) production, and mitogen-activated protein kinases (MAPKs). After LCFAs binding, associates with beta-arrestin ARRB2 that acts as an adapter protein coupling the receptor to specific downstream signaling pathways, as well as mediating receptor endocytosis. In response to dietary fats, plays an important role in the regulation of adipocyte proliferation and differentiation. Acts as a receptor for omega-3 polyunsaturated fatty acids (PUFAs) at primary cilium of perivascular preadipocytes, initiating an adipogenic program via cAMP and CTCF-dependent chromatin remodeling that ultimately results in transcriptional activation of adipogenic genes and cell cycle entry. Induces differentiation of brown adipocytes probably via autocrine and endocrine functions of FGF21 hormone. Activates brown adipocytes by initiating intracellular calcium signaling that leads to mitochondrial depolarization and fission, and overall increased mitochondrial respiration. Consequently stimulates fatty acid uptake and oxidation in mitochondria together with UCP1-mediated thermogenic respiration, eventually reducing fat mass. Regulates bi-potential differentiation of bone marrow mesenchymal stem cells toward osteoblasts or adipocytes likely by up-regulating distinct integrins. In response to dietary fats regulates hormone secretion and appetite. Stimulates GIP and GLP1 secretion from enteroendocrine cells as well as GCG secretion in pancreatic alpha cells, thereby playing a role in the regulation of blood glucose levels. Negatively regulates glucose-induced SST secretion in pancreatic delta cells. Mediates LCFAs inhibition of GHRL secretion, an appetite-controlling hormone. In taste buds, contributes to sensing of dietary fatty acids by the gustatory system. During the inflammatory response, promotes anti-inflammatory M2 macrophage differentiation in adipose tissue. Mediates the anti-inflammatory effects of omega-3 PUFAs via inhibition of NLRP3 inflammasome activation. In this pathway, interacts with adapter protein ARRB2 and inhibits the priming step triggered by Toll-like receptors (TLRs) at the level of TAK1 and TAB1. Further inhibits the activation step when ARRB2 directly associates with NLRP3, leading to inhibition of pro-inflammatory cytokine release. Mediates LCFAs anti-apoptotic effects. Functionally, receptor for LCFAs decoupled from G-protein signaling. May signal through beta-arrestin pathway. After LCFAs binding, associates with beta-arrestin ARRB2 that may act as an adapter protein coupling the receptor to specific downstream signaling pathways, as well as mediating receptor endocytosis. The polypeptide is Free fatty acid receptor 4 (Homo sapiens (Human)).